We begin with the raw amino-acid sequence, 432 residues long: Protein RETICULATA, chloroplastic (432 aa).

A chloroplast-targeting transit peptide spans 1 to 47 (MAGCAMNLQFSSVVKVRNEISSFGICNRDFVFRDLAKAMKVPVLRIR). Positions 109 to 140 (GNVGDGFNGSDGNGGGGGGGNGGEGDGEGEDY) are disordered. Positions 111-132 (VGDGFNGSDGNGGGGGGGNGGE) are enriched in gly residues. The next 2 helical transmembrane spans lie at 249–269 (LYVADLLVGTVVNIALVGMLA) and 322–342 (IMYGAVGFGCGIVGQGIANLI).

The protein belongs to the RETICULATA family. In terms of tissue distribution, highly expressed in the vasculature of developing leaf primordia, margins of fully expanded leaves, hydathodes of rosette of cauline leaves, basal region of the lamina, stipules, root tips, stamens and in the abscission zone of the funiculus.

It is found in the plastid. Its subcellular location is the chloroplast membrane. In terms of biological role, may play a role in leaf development. Required for leaf mesophyll cell division in the early stages of leaf organogenesis. Acts in a developmental pathway that involves PPT1/CUE1 but does not include ASE2/DOV1. The sequence is that of Protein RETICULATA, chloroplastic from Arabidopsis thaliana (Mouse-ear cress).